Here is a 131-residue protein sequence, read N- to C-terminus: Acyl carrier protein 3, mitochondrial (131 aa).

The N-terminal 39 residues, 1-39 (MHCIRSSILQHLRLRVSVRPTSLLQNENGFKSIGIFNFT), are a transit peptide targeting the mitochondrion. In terms of domain architecture, Carrier spans 49–124 (DQILSRVIEL…DVATYILSET (76 aa)). O-(pantetheine 4'-phosphoryl)serine is present on S84.

This sequence belongs to the acyl carrier protein (ACP) family. In terms of assembly, complex I is composed of at least 49 different subunits. Post-translationally, 4'-phosphopantetheine is transferred from CoA to a specific serine of the apo-ACP-like protein.

It is found in the mitochondrion. The protein operates within lipid metabolism; fatty acid biosynthesis. Carrier of the growing fatty acid chain in fatty acid biosynthesis. May be involved in the synthesis of short and medium chain fatty acids. Accessory and non-catalytic subunit of the mitochondrial membrane respiratory chain NADH dehydrogenase (Complex I), which functions in the transfer of electrons from NADH to the respiratory chain. The protein is Acyl carrier protein 3, mitochondrial (MTACP2) of Arabidopsis thaliana (Mouse-ear cress).